The primary structure comprises 545 residues: Coiled-coil domain-containing protein 60 (545 aa).

Residues Asn-72–Gln-99 adopt a coiled-coil conformation. The disordered stretch occupies residues Pro-224–Glu-284. Residues Arg-238–Ser-259 are compositionally biased toward low complexity.

The protein is Coiled-coil domain-containing protein 60 (Ccdc60) of Mus musculus (Mouse).